The chain runs to 625 residues: Protein LEO1 homolog (625 aa).

2 disordered regions span residues 1-214 and 415-625; these read MVKG…DMVL and EREK…SDED. Composition is skewed to acidic residues over residues 40-55 and 63-80; these read DEAE…GEAE and EAES…PGES. 3 stretches are compositionally biased toward basic and acidic residues: residues 97–113, 121–137, and 182–197; these read SEAR…EHGG, QEVV…KHYE, and EYVR…RSPI. A Phosphoserine modification is found at serine 203. A compositionally biased stretch (basic and acidic residues) spans 415–425; sequence EREKEKREKAE. Residues 415–539 adopt a coiled-coil conformation; the sequence is EREKEKREKA…ETEEEEEEKS (125 aa). The span at 426 to 436 shows a compositional bias: polar residues; the sequence is SQNLKASTKLS. Basic and acidic residues predominate over residues 471 to 491; the sequence is YRSNRGYEEDLEAEAQRERRI. Over residues 492-501 the composition is skewed to basic residues; that stretch reads LNAKKSHKGI. Residues 523–537 show a composition bias toward acidic residues; that stretch reads EREESEYETEEEEEE. Residues 538–547 show a composition bias toward basic and acidic residues; that stretch reads KSPARGRGKD. 5 positions are modified to phosphoserine: serine 548, serine 570, serine 600, serine 605, and serine 622. Residues 548-561 are compositionally biased toward acidic residues; that stretch reads SEDEYEEDAEEDEE.

The protein belongs to the LEO1 family. Component of the nuclear PAF1 complex (PAF1C), which consists of VIP2/ELF7/PAF1, VIP3/SKI8/WDR61, VIP4/LEO1, VIP5/RTF1, VIP6/ELF8/CTR9 and CDC73. Interacts with VIP3 and VIP6. Expressed in roots, shoot apices, stems, cauline leaves, inflorescence apices and flowers.

Its subcellular location is the nucleus. Functionally, component of the PAF1 complex (PAF1C) which is involved in histone modifications such as methylation on histone H3 'Lys-4' (H3K4me3). Involved in regulation of flowering time. Required for the expression of the flowering repressor and MADS box gene FLC. Involved in the control of seed dormancy and germination. The chain is Protein LEO1 homolog from Arabidopsis thaliana (Mouse-ear cress).